Reading from the N-terminus, the 137-residue chain is Small ribosomal subunit protein uS12 (137 aa).

Residue Asp89 is modified to 3-methylthioaspartic acid. The interval Ser101–Lys137 is disordered. The segment covering Lys116–Lys137 has biased composition (low complexity).

This sequence belongs to the universal ribosomal protein uS12 family. As to quaternary structure, part of the 30S ribosomal subunit. Contacts proteins S8 and S17. May interact with IF1 in the 30S initiation complex.

Its function is as follows. With S4 and S5 plays an important role in translational accuracy. Functionally, interacts with and stabilizes bases of the 16S rRNA that are involved in tRNA selection in the A site and with the mRNA backbone. Located at the interface of the 30S and 50S subunits, it traverses the body of the 30S subunit contacting proteins on the other side and probably holding the rRNA structure together. The combined cluster of proteins S8, S12 and S17 appears to hold together the shoulder and platform of the 30S subunit. This chain is Small ribosomal subunit protein uS12, found in Chlorobium chlorochromatii (strain CaD3).